A 187-amino-acid chain; its full sequence is Auxin-binding protein T85 (187 aa).

A signal peptide spans 1–20 (MARHVLVVVAVLLFATAEAS). The cysteines at positions 22 and 177 are disulfide-linked. Residues His-78, His-80, and Glu-84 each contribute to the Zn(2+) site. A glycan (N-linked (GlcNAc...) asparagine) is linked at Asn-117. Zn(2+) is bound at residue His-128. Residues 184 to 187 (KDEL) carry the Prevents secretion from ER motif.

Homodimer.

It localises to the endoplasmic reticulum lumen. Its function is as follows. This is probably a receptor for the plant hormone auxin. This Nicotiana tabacum (Common tobacco) protein is Auxin-binding protein T85 (T85).